The sequence spans 138 residues: MINNVVLIGRLTRDVELRYTPSNIANATFNLAVNRNFKNAAGDREADFINCVMWRQQAENLANWTKKGMLIGITGRIQTRSYENQQGQRIYVTEVVADSFQILEKRDNSTNQASMDDQLPPSFGNSQPMDISDDDLPF.

The region spanning 1 to 104 is the SSB domain; the sequence is MINNVVLIGR…VVADSFQILE (104 aa). The segment at 107-138 is disordered; sequence DNSTNQASMDDQLPPSFGNSQPMDISDDDLPF. The Important for interaction with partner proteins motif lies at 133 to 138; the sequence is DDDLPF.

As to quaternary structure, homotetramer.

In terms of biological role, plays an important role in DNA replication, recombination and repair. Binds to ssDNA and to an array of partner proteins to recruit them to their sites of action during DNA metabolism. This is Single-stranded DNA-binding protein 4 (ssb4) from Streptococcus agalactiae serotype V (strain ATCC BAA-611 / 2603 V/R).